We begin with the raw amino-acid sequence, 730 residues long: uncharacterized protein (730 aa).

Residues 615–625 (FDKENSFDPSD) show a composition bias toward basic and acidic residues. Disordered stretches follow at residues 615 to 667 (FDKE…SSFS) and 684 to 730 (KSGS…FGKI). Low complexity-rich tracts occupy residues 653–667 (SSSS…SSFS) and 684–701 (KSGS…NSSS). A compositionally biased stretch (basic residues) spans 713–723 (KKKKKKKKKKS).

This is an uncharacterized protein from Saccharomyces cerevisiae (strain ATCC 204508 / S288c) (Baker's yeast).